Here is a 694-residue protein sequence, read N- to C-terminus: Transcription activator of gluconeogenesis PTRG_06536 (694 aa).

Residues Met1–Arg57 form a disordered region. Residues Cys64–Cys92 constitute a DNA-binding region (zn(2)-C6 fungal-type). Disordered regions lie at residues Phe175–Leu216, Ala289–Pro369, Ala384–Lys420, and Val539–Ala569. Over residues Ser193 to Ser204 the composition is skewed to polar residues. The segment covering Gln205–Gly214 has biased composition (low complexity). Residues Trp302–Gly324 are compositionally biased toward polar residues. Low complexity predominate over residues Ala349–Thr363. Polar residues predominate over residues Arg392–His408. The PAS domain maps to Leu485 to Pro559.

It belongs to the ERT1/acuK family.

Its subcellular location is the nucleus. Its function is as follows. Transcription factor which regulates nonfermentable carbon utilization. Activator of gluconeogenetic genes. The protein is Transcription activator of gluconeogenesis PTRG_06536 of Pyrenophora tritici-repentis (strain Pt-1C-BFP) (Wheat tan spot fungus).